Consider the following 1022-residue polypeptide: Sodium/potassium-transporting ATPase subunit alpha (1022 aa).

Residues 1-5 (MGKGA) constitute a propeptide that is removed on maturation. The interval 1-34 (MGKGAASEKYQPAATSENAKNSKKSKSKTTDLDE) is disordered. The Cytoplasmic portion of the chain corresponds to 6–87 (ASEKYQPAAT…NALTPPPTTP (82 aa)). Residue serine 16 is modified to Phosphoserine; by PKC. The interaction with phosphoinositide-3 kinase stretch occupies residues 82–84 (PPP). A helical transmembrane segment spans residues 88-108 (EWIKFCRQLFGGFSILLWTGA). Topologically, residues 109–131 (ILCFLAYGIQVATVDNPANDNLY) are lumenal. The chain crosses the membrane as a helical span at residues 132-152 (LGVVLSTVVIITGCFSYYQEA). Residues 153–288 (KSSKIMDSFK…VGQTPIAAEI (136 aa)) are Cytoplasmic-facing. The disordered stretch occupies residues 215 to 235 (NSSLTGESEPQSRSPEYSSEN). Residues 289-308 (EHFIHIITGVAVFLGVSFFI) form a helical membrane-spanning segment. Topologically, residues 309 to 320 (LSLILGYTWLEA) are lumenal. A helical membrane pass occupies residues 321-338 (VIFLIGIIVANVPEGLLA). The Cytoplasmic portion of the chain corresponds to 339–771 (TVTVCLTLTA…EEGRLIFDNL (433 aa)). Aspartate 376 acts as the 4-aspartylphosphate intermediate in catalysis. Mg(2+) contacts are provided by aspartate 716 and aspartate 720. A helical membrane pass occupies residues 772-791 (KKSIAYTLTSNIPEITPFLV). Over 792–801 (FIIANVPLPL) the chain is Lumenal. A helical transmembrane segment spans residues 802–822 (GTVTILCIDLGTDMVPAISLA). Residues 823–842 (YERAESDIMKRQPRNPKTDK) are Cytoplasmic-facing. The chain crosses the membrane as a helical span at residues 843-865 (LVNERLISMAYGQIGMIQALGGF). The Lumenal portion of the chain corresponds to 866 to 917 (FSYFVILAENGFLPIDLIGIREKWDELWTQDLEDSYGQQWTYEQRKIVEYTC). The chain crosses the membrane as a helical span at residues 918 to 937 (HTSFFVSIVIVQWADLIICK). Residues 938–950 (TRRNSIFQQGMKN) lie on the Cytoplasmic side of the membrane. Residue serine 942 is modified to Phosphoserine; by PKA. A helical membrane pass occupies residues 951-969 (KILIFGLFEETALAAFLSY). Topologically, residues 970–984 (TPGTDIALRMYPLKP) are lumenal. Residues 985-1005 (SWWFCAFPYSLIIFLYDEARR) traverse the membrane as a helical segment. Over 1006 to 1022 (FILRRNPGGWVEQETYY) the chain is Cytoplasmic.

This sequence belongs to the cation transport ATPase (P-type) (TC 3.A.3) family. Type IIC subfamily. As to quaternary structure, the sodium/potassium-transporting ATPase is composed of a catalytic alpha subunit, an auxiliary non-catalytic beta subunit and an additional regulatory subunit.

The protein localises to the cell membrane. The enzyme catalyses K(+)(out) + Na(+)(in) + ATP + H2O = K(+)(in) + Na(+)(out) + ADP + phosphate + H(+). Functionally, this is the catalytic component of the active enzyme, which catalyzes the hydrolysis of ATP coupled with the exchange of sodium and potassium ions across the plasma membrane. This action creates the electrochemical gradient of sodium and potassium ions, providing the energy for active transport of various nutrients. This is Sodium/potassium-transporting ATPase subunit alpha from Tetronarce californica (Pacific electric ray).